Here is a 60-residue protein sequence, read N- to C-terminus: Ixodegrin-like peptide (60 aa).

A signal peptide spans 1–19; sequence MNAVFIAALLILGTSTFDA. The short motif at 49–51 is the Cell attachment site element; it reads RGD.

The protein belongs to the ixodegrin family. Post-translationally, contains 3 disulfide bonds. As to expression, expressed in salivary glands.

Its subcellular location is the secreted. Functionally, tick salivary platelet aggregation inhibitor that plays an important part in the anti-hemostatic strategy of ticks. Inhibits platelet aggregation induced by ADP, thrombin and thromboxane A2 (TXA2). Blocks platelet adhesion to soluble collagen (most probably through the binding to alpha-2/beta-1 integrin (ITGA2/ITGB1)) and binds to purified glycoprotein IIb/IIIa (ITGA2B/ITGB3) in a dose-dependent manner. In vivo, reduces thrombus weight effectively in a rat arteriovenous shunt model and inhibits thrombosis in a carrageenan-induced mouse tail thrombosis model. In Ixodes scapularis (Black-legged tick), this protein is Ixodegrin-like peptide.